A 699-amino-acid chain; its full sequence is Serine/threonine-protein kinase PRR2 (699 aa).

The tract at residues 168-193 (SSTKKNLANDISDNKHNNNSSNTIGH) is disordered. Residues 184 to 193 (NNNSSNTIGH) show a composition bias toward polar residues. Residues 361–653 (RDLDVVLGEG…INGILQDGWI (293 aa)) form the Protein kinase domain. ATP is bound by residues 367-375 (LGEGSGGKV) and K390. D484 functions as the Proton acceptor in the catalytic mechanism.

Belongs to the protein kinase superfamily. Ser/Thr protein kinase family.

It catalyses the reaction L-seryl-[protein] + ATP = O-phospho-L-seryl-[protein] + ADP + H(+). The enzyme catalyses L-threonyl-[protein] + ATP = O-phospho-L-threonyl-[protein] + ADP + H(+). Its function is as follows. Protein kinase that functions as a regulator in the pheromone-induced mating pathway downstream of mitogen-activated protein kinase (MAPK) FUS3. Diminishes transcriptional induction of genes in response to pheromone signaling. The chain is Serine/threonine-protein kinase PRR2 (PRR2) from Saccharomyces cerevisiae (strain ATCC 204508 / S288c) (Baker's yeast).